The chain runs to 229 residues: Putative N-acetylmannosamine-6-phosphate 2-epimerase (229 aa).

This sequence belongs to the NanE family.

It carries out the reaction an N-acyl-D-glucosamine 6-phosphate = an N-acyl-D-mannosamine 6-phosphate. The protein operates within amino-sugar metabolism; N-acetylneuraminate degradation; D-fructose 6-phosphate from N-acetylneuraminate: step 3/5. Converts N-acetylmannosamine-6-phosphate (ManNAc-6-P) to N-acetylglucosamine-6-phosphate (GlcNAc-6-P). The polypeptide is Putative N-acetylmannosamine-6-phosphate 2-epimerase (Escherichia coli O139:H28 (strain E24377A / ETEC)).